Reading from the N-terminus, the 217-residue chain is Kunitz-type trypsin inhibitor-like 1 protein (217 aa).

A signal peptide spans Met1–Asn26. Disulfide bonds link Cys70–Cys115 and Cys168–Cys175. Asn191 carries N-linked (GlcNAc...) asparagine glycosylation.

The protein belongs to the protease inhibitor I3 (leguminous Kunitz-type inhibitor) family. In terms of tissue distribution, expressed in roots, leaves, epidermal layers of elongating stems, meristems and in the vascular system.

The protein resides in the secreted. Its function is as follows. Might act as a protease inhibitor involved in plant defense responses. The polypeptide is Kunitz-type trypsin inhibitor-like 1 protein (PIP20-1) (Pisum sativum (Garden pea)).